Consider the following 199-residue polypeptide: Chaperone protein TorD (199 aa).

Belongs to the TorD/DmsD family. TorD subfamily.

The protein localises to the cytoplasm. Involved in the biogenesis of TorA. Acts on TorA before the insertion of the molybdenum cofactor and, as a result, probably favors a conformation of the apoenzyme that is competent for acquiring the cofactor. The protein is Chaperone protein TorD of Escherichia coli O6:H1 (strain CFT073 / ATCC 700928 / UPEC).